Consider the following 422-residue polypeptide: UDP-N-acetylglucosamine 1-carboxyvinyltransferase (422 aa).

Residue 22–23 (KN) participates in phosphoenolpyruvate binding. UDP-N-acetyl-alpha-D-glucosamine is bound at residue Arg-94. Catalysis depends on Cys-118, which acts as the Proton donor. Cys-118 bears the 2-(S-cysteinyl)pyruvic acid O-phosphothioketal mark. Residues 123–127 (RPVDL), Asp-309, and Ile-331 each bind UDP-N-acetyl-alpha-D-glucosamine.

The protein belongs to the EPSP synthase family. MurA subfamily.

Its subcellular location is the cytoplasm. It catalyses the reaction phosphoenolpyruvate + UDP-N-acetyl-alpha-D-glucosamine = UDP-N-acetyl-3-O-(1-carboxyvinyl)-alpha-D-glucosamine + phosphate. It functions in the pathway cell wall biogenesis; peptidoglycan biosynthesis. Its function is as follows. Cell wall formation. Adds enolpyruvyl to UDP-N-acetylglucosamine. The chain is UDP-N-acetylglucosamine 1-carboxyvinyltransferase from Cereibacter sphaeroides (strain ATCC 17025 / ATH 2.4.3) (Rhodobacter sphaeroides).